We begin with the raw amino-acid sequence, 177 residues long: MSRVANNPVVLPSGVEVKLNGQEINVKGSKGALQFTIHQAVEVKQEENVLRFAARDGAKQSRALAGTTRALVNNMVTGVSTGWERKLQLTGVGYRAQAQGKKLNLTLGFSHPVEYELPEGVTAETPSNTEVVIRGIDKQQVGQVAAEIRAFRPPEPYKGKGVRYADEQVRRKEAKKK.

Over residues 154-171 (PEPYKGKGVRYADEQVRR) the composition is skewed to basic and acidic residues. Residues 154–177 (PEPYKGKGVRYADEQVRRKEAKKK) form a disordered region.

It belongs to the universal ribosomal protein uL6 family. In terms of assembly, part of the 50S ribosomal subunit.

Its function is as follows. This protein binds to the 23S rRNA, and is important in its secondary structure. It is located near the subunit interface in the base of the L7/L12 stalk, and near the tRNA binding site of the peptidyltransferase center. In Marinobacter nauticus (strain ATCC 700491 / DSM 11845 / VT8) (Marinobacter aquaeolei), this protein is Large ribosomal subunit protein uL6.